Here is a 156-residue protein sequence, read N- to C-terminus: MFNVVLVEPEIPPNTGNVIRLCANTGARLHLIEPLGFPLDDAKMRRAGLDYHEYAQMRVHRDWDAFVAAEAPDPARMFAFTTRGSGRFHDRAFEPGDWFVFGAETRGLAPALVDRFAPEQRVRLPMRPGNRSLNLSNTVAVVVFEAWRQAGFEGGA.

Residues Gly-102, Leu-124, and Ser-132 each coordinate S-adenosyl-L-methionine.

It belongs to the class IV-like SAM-binding methyltransferase superfamily. RNA methyltransferase TrmH family. TrmL subfamily. As to quaternary structure, homodimer.

It localises to the cytoplasm. It catalyses the reaction cytidine(34) in tRNA + S-adenosyl-L-methionine = 2'-O-methylcytidine(34) in tRNA + S-adenosyl-L-homocysteine + H(+). The catalysed reaction is 5-carboxymethylaminomethyluridine(34) in tRNA(Leu) + S-adenosyl-L-methionine = 5-carboxymethylaminomethyl-2'-O-methyluridine(34) in tRNA(Leu) + S-adenosyl-L-homocysteine + H(+). Its function is as follows. Methylates the ribose at the nucleotide 34 wobble position in the two leucyl isoacceptors tRNA(Leu)(CmAA) and tRNA(Leu)(cmnm5UmAA). Catalyzes the methyl transfer from S-adenosyl-L-methionine to the 2'-OH of the wobble nucleotide. The protein is tRNA (cytidine(34)-2'-O)-methyltransferase of Burkholderia pseudomallei (strain 1106a).